Here is a 573-residue protein sequence, read N- to C-terminus: L-lactate dehydrogenase (cytochrome) (573 aa).

The N-terminal 73 residues, 1-73, are a transit peptide targeting the mitochondrion; it reads MFKSQLRTAT…LYQKDKFISA (73 aa). A Cytochrome b5 heme-binding domain is found at 80–157; the sequence is DIELTPEIVS…PPEKHLGPLV (78 aa). 3 residues coordinate heme b: His-115, His-138, and Tyr-208. One can recognise an FMN hydroxy acid dehydrogenase domain in the interval 182 to 542; sequence PPLSQMINLH…TPELLDTRSI (361 aa). Tyr-208 serves as a coordination point for pyruvate. Residues 260–263, Ser-290, and Gln-313 contribute to the FMN site; that span reads SATA. Residue Tyr-315 participates in pyruvate binding. Thr-341 contacts FMN. Lys-357 is a heme b binding site. Lys-408 is an FMN binding site. Residues His-432 and Arg-435 each coordinate pyruvate. FMN-binding positions include 468 to 472 and 491 to 492; these read DGGVR and GR.

The protein in the N-terminal section; belongs to the cytochrome b5 family. In the C-terminal section; belongs to the FMN-dependent alpha-hydroxy acid dehydrogenase family. In terms of assembly, homotetramer. FMN is required as a cofactor. The cofactor is heme b.

The protein resides in the mitochondrion intermembrane space. It catalyses the reaction (S)-lactate + 2 Fe(III)-[cytochrome c] = 2 Fe(II)-[cytochrome c] + pyruvate + 2 H(+). Catalyzes the oxidation of (S)-lactate (L-lactate) to pyruvate with subsequent transfer of electrons to cytochrome c. Is involved in the utilization of (S)-lactate as a sole source of carbon for growth. The protein is L-lactate dehydrogenase (cytochrome) (CYB2) of Wickerhamomyces anomalus (Yeast).